The chain runs to 501 residues: Cytochrome P450 2J6 (501 aa).

Cysteine 447 is a heme binding site.

The protein belongs to the cytochrome P450 family. Heme serves as cofactor.

It is found in the endoplasmic reticulum membrane. It localises to the microsome membrane. The catalysed reaction is an organic molecule + reduced [NADPH--hemoprotein reductase] + O2 = an alcohol + oxidized [NADPH--hemoprotein reductase] + H2O + H(+). The chain is Cytochrome P450 2J6 (Cyp2j6) from Mus musculus (Mouse).